The primary structure comprises 211 residues: GTP-binding protein ypt5 (211 aa).

21–28 (GDSAVGKS) lines the GTP pocket. The Effector region signature appears at 43-51 (RESTIGAAF). Residues 70-74 (DTAGQ) and 128-131 (NKLD) each bind GTP. 2 S-geranylgeranyl cysteine lipidation sites follow: Cys209 and Cys211. Cys211 bears the Cysteine methyl ester mark.

It belongs to the small GTPase superfamily. Rab family.

Its subcellular location is the cell membrane. Its function is as follows. Protein transport. Probably involved in vesicular traffic. The chain is GTP-binding protein ypt5 (ypt5) from Schizosaccharomyces pombe (strain 972 / ATCC 24843) (Fission yeast).